Reading from the N-terminus, the 136-residue chain is Large ribosomal subunit protein bL17 (136 aa).

It belongs to the bacterial ribosomal protein bL17 family. In terms of assembly, part of the 50S ribosomal subunit. Contacts protein L32.

The sequence is that of Large ribosomal subunit protein bL17 from Rhodopseudomonas palustris (strain BisA53).